Reading from the N-terminus, the 75-residue chain is Large ribosomal subunit protein bL31 (75 aa).

Belongs to the bacterial ribosomal protein bL31 family. Type A subfamily. Part of the 50S ribosomal subunit.

Its function is as follows. Binds the 23S rRNA. The sequence is that of Large ribosomal subunit protein bL31 from Nitrobacter winogradskyi (strain ATCC 25391 / DSM 10237 / CIP 104748 / NCIMB 11846 / Nb-255).